Here is a 144-residue protein sequence, read N- to C-terminus: Cytochrome c oxidase subunit 4 isoform 1, mitochondrial (144 aa).

At 1-73 (SVVKSEDFSL…SFAEMNRGSN (73 aa)) the chain is on the mitochondrial matrix side. Lysine 4 carries the post-translational modification N6-acetyllysine; alternate. At lysine 4 the chain carries N6-succinyllysine; alternate. Lysine 28 carries the N6-acetyllysine modification. Phosphoserine is present on residues serine 31 and serine 33. The residue at position 35 (lysine 35) is an N6-acetyllysine; alternate. Lysine 35 carries the post-translational modification N6-succinyllysine; alternate. N6-acetyllysine is present on lysine 42. A helical membrane pass occupies residues 74–99 (EWKTVVGGAMFFIGFTALIIMWQKRH). Residues 100-144 (VYGPLPQSFDKEWVAKQTKRMLDMKVNPIQGLASKWDYEKNEWKK) are Mitochondrial intermembrane-facing.

Belongs to the cytochrome c oxidase IV family. Component of the cytochrome c oxidase (complex IV, CIV), a multisubunit enzyme composed of 14 subunits. The complex is composed of a catalytic core of 3 subunits MT-CO1, MT-CO2 and MT-CO3, encoded in the mitochondrial DNA, and 11 supernumerary subunits COX4I, COX5A, COX5B, COX6A, COX6B, COX6C, COX7A, COX7B, COX7C, COX8 and NDUFA4, which are encoded in the nuclear genome. The complex exists as a monomer or a dimer and forms supercomplexes (SCs) in the inner mitochondrial membrane with NADH-ubiquinone oxidoreductase (complex I, CI) and ubiquinol-cytochrome c oxidoreductase (cytochrome b-c1 complex, complex III, CIII), resulting in different assemblies (supercomplex SCI(1)III(2)IV(1) and megacomplex MCI(2)III(2)IV(2)). Interacts with PHB2; the interaction decreases in absence of SPHK2. Interacts with AFG1L. Interacts with ABCB7; this interaction allows the regulation of cellular iron homeostasis and cellular reactive oxygen species (ROS) levels in cardiomyocytes. Interacts with FLVCR2; this interaction occurs in the absence of heme and is disrupted upon heme binding. Interacts with IRGC.

The protein resides in the mitochondrion inner membrane. The protein operates within energy metabolism; oxidative phosphorylation. In terms of biological role, component of the cytochrome c oxidase, the last enzyme in the mitochondrial electron transport chain which drives oxidative phosphorylation. The respiratory chain contains 3 multisubunit complexes succinate dehydrogenase (complex II, CII), ubiquinol-cytochrome c oxidoreductase (cytochrome b-c1 complex, complex III, CIII) and cytochrome c oxidase (complex IV, CIV), that cooperate to transfer electrons derived from NADH and succinate to molecular oxygen, creating an electrochemical gradient over the inner membrane that drives transmembrane transport and the ATP synthase. Cytochrome c oxidase is the component of the respiratory chain that catalyzes the reduction of oxygen to water. Electrons originating from reduced cytochrome c in the intermembrane space (IMS) are transferred via the dinuclear copper A center (CU(A)) of subunit 2 and heme A of subunit 1 to the active site in subunit 1, a binuclear center (BNC) formed by heme A3 and copper B (CU(B)). The BNC reduces molecular oxygen to 2 water molecules using 4 electrons from cytochrome c in the IMS and 4 protons from the mitochondrial matrix. The polypeptide is Cytochrome c oxidase subunit 4 isoform 1, mitochondrial (COX4I1) (Pongo pygmaeus (Bornean orangutan)).